The primary structure comprises 397 residues: L-aspartate--L-methionine ligase (397 aa).

Positions 131–347 (VALNNKARIP…FFNTILKYVK (217 aa)) constitute an ATP-grasp domain. Positions 136, 171, 173, 183, 186, 188, 215, 216, 218, 223, and 246 each coordinate ADP. Mg(2+) is bound at residue D288. 2 residues coordinate ADP: L290 and I300. Position 301 (D301) interacts with Mg(2+). The active-site Critical for catalysis is R305.

In terms of assembly, primarily a monomer in solution. Minor homodimer formation. The cofactor is Mg(2+).

The catalysed reaction is L-aspartate + L-methionine + ATP = L-aspartyl-L-methionine + ADP + phosphate + H(+). The protein operates within amino-acid metabolism. L-amino acid ligase, which preferentially catalyzes the formation of L-aspartyl-L-methionine dipeptide from L-aspartate and L-methionine in the presence of ATP. Less active with L-asparagine and L-methionine as substrates. Less active with L-aspartate and either L-phenylalanine, L-valine, L-leucine or L-isoleucine as substrates. Decreased activity when L-methionine is substituted with seleno-DL-methionine, L-homocysteine, L-methionine sulfoxide, L-methionine sulfoximine and o-acetyl-L-serine. Decreased activity with acetylation of L-methionine amino group. Decreased activity by modification of L-methionine carboxylate to L-methionine methyl ester. No activity when L-methionine is substituted with L-homoserine. No activity with formylation of L-methionine amino group. No activity by modification of L-methionine carboxylate to L-methionine-glycine carboxylate. No activity when L-aspartate substrate is replaced by analogs such as L-homoserine, DL-aspartate beta-methyl ester, L-glutamate or o-acetyl-L-serine. No activity when L-aspartate amino and alpha-carboxylate groups are modified to L-malate, glycine-L-aspartate, L-aspartate-glycine or N-carbamoyl-DL-aspartate. No activity with L-methionine or L-aspartate as sole substrates. No activity in presence of other nucleoside triphosphates including GTP, CTP, UTP, TTP or ITP. Involved in sulfur amino acid metabolism. The protein is L-aspartate--L-methionine ligase of Staphylococcus aureus (strain NCTC 8325 / PS 47).